Consider the following 294-residue polypeptide: Holothin acyltransferase (294 aa).

Residues 17 to 146 form the N-acetyltransferase domain; it reads WTSKPASLEE…SRLVGIHNQQ (130 aa).

It catalyses the reaction marinoloyl-CoA C + holothin = thiomarinol C + CoA. The catalysed reaction is pseudomonoyl-CoA C + holothin = pseudomonic acid C--holothin + CoA. Its pathway is antibiotic biosynthesis. Functionally, acyltransferase that catalyzes the formation of pseudomonic acid C-holothin (PAC-holothin), a thiomarinol analog, from pseudomonoyl-CoA C (PAC-CoA) and holothin. Accepts linear CoA substrates of different lengths, including propionyl-, hexanoyl-, octanoyl-, oleoyl- and dodecanoyl-CoA, readily converting all into the corresponding acyl-holothin adducts. In vivo, is probably involved in the biosynthesis of thiomarinol, a naturally occurring double-headed antibiotic. This chain is Holothin acyltransferase, found in Pseudoalteromonas sp. (strain SANK 73390).